A 452-amino-acid chain; its full sequence is GTPase Der (452 aa).

EngA-type G domains lie at 4–169 (PIVA…PSPD) and 177–352 (INVS…EEHR). Residues 10–17 (GRPNVGKS), 57–61 (DTGGL), 120–123 (NKCE), 183–190 (GRPNVGKS), 230–234 (DTAGI), and 295–298 (NKWD) contribute to the GTP site. Positions 353–438 (RRVNTSVVNE…PIRLLWRGKK (86 aa)) constitute a KH-like domain.

This sequence belongs to the TRAFAC class TrmE-Era-EngA-EngB-Septin-like GTPase superfamily. EngA (Der) GTPase family. Associates with the 50S ribosomal subunit.

Functionally, GTPase that plays an essential role in the late steps of ribosome biogenesis. This Crocosphaera subtropica (strain ATCC 51142 / BH68) (Cyanothece sp. (strain ATCC 51142)) protein is GTPase Der.